Reading from the N-terminus, the 843-residue chain is Protein P (843 aa).

A terminal protein domain (TP) region spans residues 1–177 (MPLSYPHFRK…FCGSPYSWEQ (177 aa)). The segment at 178-346 (ELQHGSTSIN…YCLSHIINLL (169 aa)) is spacer. Disordered stretches follow at residues 180 to 221 (QHGS…FQQS) and 282 to 313 (REKT…GSVR). Residues 196-221 (SLCTQSSGILSRPSAGSSIQGKFQQS) are compositionally biased toward polar residues. The interval 347–690 (EDWGPCYEHG…YMHLYPVARQ (344 aa)) is polymerase/reverse transcriptase domain (RT). A Reverse transcriptase domain is found at 357–600 (QHHIRTPRTP…YTLNFMGYVI (244 aa)). Residues aspartate 429, aspartate 551, and aspartate 552 each coordinate Mg(2+).

This sequence belongs to the hepadnaviridae P protein family.

It carries out the reaction DNA(n) + a 2'-deoxyribonucleoside 5'-triphosphate = DNA(n+1) + diphosphate. The enzyme catalyses Endonucleolytic cleavage to 5'-phosphomonoester.. Its activity is regulated as follows. Activated by host HSP70 and HSP40 in vitro to be able to bind the epsilon loop of the pgRNA. Because deletion of the RNase H region renders the protein partly chaperone-independent, the chaperones may be needed indirectly to relieve occlusion of the RNA-binding site by this domain. Inhibited by several reverse-transcriptase inhibitors: Lamivudine, Adefovir and Entecavir. Its function is as follows. Multifunctional enzyme that converts the viral RNA genome into dsDNA in viral cytoplasmic capsids. This enzyme displays a DNA polymerase activity that can copy either DNA or RNA templates, and a ribonuclease H (RNase H) activity that cleaves the RNA strand of RNA-DNA heteroduplexes in a partially processive 3'- to 5'-endonucleasic mode. Neo-synthesized pregenomic RNA (pgRNA) are encapsidated together with the P protein, and reverse-transcribed inside the nucleocapsid. Initiation of reverse-transcription occurs first by binding the epsilon loop on the pgRNA genome, and is initiated by protein priming, thereby the 5'-end of (-)DNA is covalently linked to P protein. Partial (+)DNA is synthesized from the (-)DNA template and generates the relaxed circular DNA (RC-DNA) genome. After budding and infection, the RC-DNA migrates in the nucleus, and is converted into a plasmid-like covalently closed circular DNA (cccDNA). The activity of P protein does not seem to be necessary for cccDNA generation, and is presumably released from (+)DNA by host nuclear DNA repair machinery. The chain is Protein P from Homo sapiens (Human).